The chain runs to 463 residues: ATP-dependent protease ATPase subunit HslU (463 aa).

Residues Ile-19, 61–66 (GVGKTE), Asp-277, Glu-341, and Arg-413 each bind ATP.

It belongs to the ClpX chaperone family. HslU subfamily. As to quaternary structure, a double ring-shaped homohexamer of HslV is capped on each side by a ring-shaped HslU homohexamer. The assembly of the HslU/HslV complex is dependent on binding of ATP.

It localises to the cytoplasm. Functionally, ATPase subunit of a proteasome-like degradation complex; this subunit has chaperone activity. The binding of ATP and its subsequent hydrolysis by HslU are essential for unfolding of protein substrates subsequently hydrolyzed by HslV. HslU recognizes the N-terminal part of its protein substrates and unfolds these before they are guided to HslV for hydrolysis. In Bacillus cereus (strain AH187), this protein is ATP-dependent protease ATPase subunit HslU.